The sequence spans 290 residues: uncharacterized protein (290 aa).

Its subcellular location is the cytoplasm. This is an uncharacterized protein from Saccharomyces cerevisiae (strain ATCC 204508 / S288c) (Baker's yeast).